Reading from the N-terminus, the 461-residue chain is Cysteine--tRNA ligase (461 aa).

Position 28 (cysteine 28) interacts with Zn(2+). Residues 30–40 (ITVYDLCHIGH) carry the 'HIGH' region motif. The Zn(2+) site is built by cysteine 209, histidine 234, and glutamate 238. Positions 266-270 (KMSKS) match the 'KMSKS' region motif. Lysine 269 contacts ATP.

It belongs to the class-I aminoacyl-tRNA synthetase family. Monomer. Zn(2+) serves as cofactor.

It localises to the cytoplasm. The enzyme catalyses tRNA(Cys) + L-cysteine + ATP = L-cysteinyl-tRNA(Cys) + AMP + diphosphate. This chain is Cysteine--tRNA ligase, found in Klebsiella pneumoniae (strain 342).